A 146-amino-acid polypeptide reads, in one-letter code: MNQVSEGSRTVSVEEMPRVLQLRAANTNITEGESTSQSRNVRWEEDVVDNENMNKKKTKICCIFHPAQEEEDPEQLCPSDHEHSSSSSSSSSSESDDDDKYNSEQRRQRRIERRRRRQKTNRPASPNAYEIQPDYSEYRKRMNANV.

Positions 23 to 146 (RAANTNITEG…EYRKRMNANV (124 aa)) are disordered. Polar residues predominate over residues 24-40 (AANTNITEGESTSQSRN). The span at 107–120 (RQRRIERRRRRQKT) shows a compositional bias: basic residues.

This sequence belongs to the YPI1 family.

It is found in the nucleus. Functionally, regulator of type 1 phosphatases which maintains protein phosphatase activity under strict control. This is Type 1 phosphatases regulator YPI1 (YPI1) from Candida glabrata (strain ATCC 2001 / BCRC 20586 / JCM 3761 / NBRC 0622 / NRRL Y-65 / CBS 138) (Yeast).